A 1403-amino-acid polypeptide reads, in one-letter code: DNA-directed RNA polymerase subunit beta' (1403 aa).

4 residues coordinate Zn(2+): cysteine 68, cysteine 70, cysteine 83, and cysteine 86. Positions 459, 461, and 463 each coordinate Mg(2+). Zn(2+) is bound by residues cysteine 814, cysteine 887, cysteine 894, and cysteine 897.

It belongs to the RNA polymerase beta' chain family. In terms of assembly, the RNAP catalytic core consists of 2 alpha, 1 beta, 1 beta' and 1 omega subunit. When a sigma factor is associated with the core the holoenzyme is formed, which can initiate transcription. It depends on Mg(2+) as a cofactor. Zn(2+) is required as a cofactor.

The catalysed reaction is RNA(n) + a ribonucleoside 5'-triphosphate = RNA(n+1) + diphosphate. In terms of biological role, DNA-dependent RNA polymerase catalyzes the transcription of DNA into RNA using the four ribonucleoside triphosphates as substrates. The sequence is that of DNA-directed RNA polymerase subunit beta' from Solibacter usitatus (strain Ellin6076).